The chain runs to 373 residues: UDP-N-acetylglucosamine--N-acetylmuramyl-(pentapeptide) pyrophosphoryl-undecaprenol N-acetylglucosamine transferase (373 aa).

Residues 13–15, Asn124, Arg165, Ser192, and Gln293 each bind UDP-N-acetyl-alpha-D-glucosamine; that span reads TGG.

This sequence belongs to the glycosyltransferase 28 family. MurG subfamily.

It localises to the cell inner membrane. The catalysed reaction is di-trans,octa-cis-undecaprenyl diphospho-N-acetyl-alpha-D-muramoyl-L-alanyl-D-glutamyl-meso-2,6-diaminopimeloyl-D-alanyl-D-alanine + UDP-N-acetyl-alpha-D-glucosamine = di-trans,octa-cis-undecaprenyl diphospho-[N-acetyl-alpha-D-glucosaminyl-(1-&gt;4)]-N-acetyl-alpha-D-muramoyl-L-alanyl-D-glutamyl-meso-2,6-diaminopimeloyl-D-alanyl-D-alanine + UDP + H(+). It functions in the pathway cell wall biogenesis; peptidoglycan biosynthesis. In terms of biological role, cell wall formation. Catalyzes the transfer of a GlcNAc subunit on undecaprenyl-pyrophosphoryl-MurNAc-pentapeptide (lipid intermediate I) to form undecaprenyl-pyrophosphoryl-MurNAc-(pentapeptide)GlcNAc (lipid intermediate II). In Sinorhizobium fredii (strain NBRC 101917 / NGR234), this protein is UDP-N-acetylglucosamine--N-acetylmuramyl-(pentapeptide) pyrophosphoryl-undecaprenol N-acetylglucosamine transferase.